Reading from the N-terminus, the 122-residue chain is Large ribosomal subunit protein uL18 (122 aa).

A compositionally biased stretch (basic residues) spans M1–M16. Positions M1–P29 are disordered.

This sequence belongs to the universal ribosomal protein uL18 family. Part of the 50S ribosomal subunit; part of the 5S rRNA/L5/L18/L25 subcomplex. Contacts the 5S and 23S rRNAs.

This is one of the proteins that bind and probably mediate the attachment of the 5S RNA into the large ribosomal subunit, where it forms part of the central protuberance. The sequence is that of Large ribosomal subunit protein uL18 from Fusobacterium nucleatum subsp. nucleatum (strain ATCC 25586 / DSM 15643 / BCRC 10681 / CIP 101130 / JCM 8532 / KCTC 2640 / LMG 13131 / VPI 4355).